The sequence spans 348 residues: Alcohol dehydrogenase 1 (348 aa).

Residues cysteine 44, histidine 67, cysteine 98, cysteine 101, cysteine 104, cysteine 112, and cysteine 154 each contribute to the Zn(2+) site. NAD(+) is bound by residues 178–184 (GAGGGLG), aspartate 202, lysine 207, 269–271 (VGL), and arginine 341.

Belongs to the zinc-containing alcohol dehydrogenase family. Homotetramer. It depends on Zn(2+) as a cofactor.

The protein localises to the cytoplasm. The enzyme catalyses a primary alcohol + NAD(+) = an aldehyde + NADH + H(+). It catalyses the reaction a secondary alcohol + NAD(+) = a ketone + NADH + H(+). Functionally, converts ethanol to acetaldehyde and plays a major role in xylose fermentation. The sequence is that of Alcohol dehydrogenase 1 (ADH1) from Scheffersomyces stipitis (strain ATCC 58785 / CBS 6054 / NBRC 10063 / NRRL Y-11545) (Yeast).